We begin with the raw amino-acid sequence, 310 residues long: L-lactate dehydrogenase (310 aa).

NAD(+)-binding positions include Val11, Asp32, Tyr62, and 76-77; that span reads GV. Substrate is bound by residues Gln79, Arg85, and 117–120; that span reads NPVD. Residues 115–117 and Ser140 contribute to the NAD(+) site; that span reads ATN. 145–148 is a binding site for substrate; it reads DTAR. Arg150 and His165 together coordinate beta-D-fructose 1,6-bisphosphate. His172 functions as the Proton acceptor in the catalytic mechanism. At Tyr218 the chain carries Phosphotyrosine. A substrate-binding site is contributed by Thr227.

It belongs to the LDH/MDH superfamily. LDH family. In terms of assembly, homotetramer.

Its subcellular location is the cytoplasm. The catalysed reaction is (S)-lactate + NAD(+) = pyruvate + NADH + H(+). Its pathway is fermentation; pyruvate fermentation to lactate; (S)-lactate from pyruvate: step 1/1. Allosterically activated by fructose 1,6-bisphosphate (FBP). Its function is as follows. Catalyzes the conversion of lactate to pyruvate. This is L-lactate dehydrogenase from Thermus thermophilus (strain ATCC BAA-163 / DSM 7039 / HB27).